The primary structure comprises 142 residues: NADH-quinone oxidoreductase subunit A 2 (142 aa).

3 helical membrane-spanning segments follow: residues Phe-18–Ala-38, Phe-73–Trp-93, and Gly-104–Leu-124.

The protein belongs to the complex I subunit 3 family. As to quaternary structure, NDH-1 is composed of 14 different subunits. Subunits NuoA, H, J, K, L, M, N constitute the membrane sector of the complex.

It localises to the cell inner membrane. The catalysed reaction is a quinone + NADH + 5 H(+)(in) = a quinol + NAD(+) + 4 H(+)(out). Its function is as follows. NDH-1 shuttles electrons from NADH, via FMN and iron-sulfur (Fe-S) centers, to quinones in the respiratory chain. The immediate electron acceptor for the enzyme in this species is believed to be ubiquinone. Couples the redox reaction to proton translocation (for every two electrons transferred, four hydrogen ions are translocated across the cytoplasmic membrane), and thus conserves the redox energy in a proton gradient. This chain is NADH-quinone oxidoreductase subunit A 2, found in Geobacter sulfurreducens (strain ATCC 51573 / DSM 12127 / PCA).